We begin with the raw amino-acid sequence, 388 residues long: Probable nitrate transporter NarT (388 aa).

The next 12 helical transmembrane spans lie at 14–34 (TLSL…MPMI), 45–65 (ISIV…PFGY), 69–89 (IIGA…PIFL), 98–118 (MLML…VGVT), 139–159 (GNLG…AIGW), 161–181 (STVR…FFLG), 206–226 (YYLS…GIFL), 242–262 (GIRA…GGII), 276–296 (FLFM…ILFT), 297–317 (VGCL…FKLV), 330–350 (GIVS…ITYV), and 359–379 (LAFI…WHLS).

This sequence belongs to the major facilitator superfamily. Nitrate/nitrite porter (TC 2.A.1.8) family.

The protein resides in the cell membrane. Functionally, probably required for nitrate uptake under anoxic conditions. Also possibly involved in excretion of nitrite produced by the dissimilatory reduction of nitrate. The protein is Probable nitrate transporter NarT (narT) of Staphylococcus carnosus (strain TM300).